We begin with the raw amino-acid sequence, 475 residues long: Ribulose bisphosphate carboxylase large chain (475 aa).

The propeptide occupies 1–2; sequence MS. Pro3 carries the post-translational modification N-acetylproline. Lys14 carries the N6,N6,N6-trimethyllysine modification. Substrate-binding residues include Asn123 and Thr173. The Proton acceptor role is filled by Lys175. Residue Lys177 participates in substrate binding. Positions 201, 203, and 204 each coordinate Mg(2+). Lys201 is subject to N6-carboxylysine. His294 serves as the catalytic Proton acceptor. Residues Arg295, His327, and Ser379 each contribute to the substrate site.

It belongs to the RuBisCO large chain family. Type I subfamily. In terms of assembly, heterohexadecamer of 8 large chains and 8 small chains; disulfide-linked. The disulfide link is formed within the large subunit homodimers. Mg(2+) serves as cofactor. In terms of processing, the disulfide bond which can form in the large chain dimeric partners within the hexadecamer appears to be associated with oxidative stress and protein turnover.

The protein localises to the plastid. It localises to the chloroplast. The enzyme catalyses 2 (2R)-3-phosphoglycerate + 2 H(+) = D-ribulose 1,5-bisphosphate + CO2 + H2O. It carries out the reaction D-ribulose 1,5-bisphosphate + O2 = 2-phosphoglycolate + (2R)-3-phosphoglycerate + 2 H(+). RuBisCO catalyzes two reactions: the carboxylation of D-ribulose 1,5-bisphosphate, the primary event in carbon dioxide fixation, as well as the oxidative fragmentation of the pentose substrate in the photorespiration process. Both reactions occur simultaneously and in competition at the same active site. This Populus tremuloides (Quaking aspen) protein is Ribulose bisphosphate carboxylase large chain.